The chain runs to 458 residues: Type III intermediate filament (458 aa).

Residues 1-100 (MEKGYKMNRS…KVNRTNEKAE (100 aa)) form a head region. Residues 97–405 (EKAEMIELND…KLLEGEENRI (309 aa)) form the IF rod domain. The interval 406-458 (SMPLPSFGSMSLSDAMFEQQPFENRTSKKKIVIKTVETSGGDVISETTQKIED) is tail.

It belongs to the intermediate filament family.

This chain is Type III intermediate filament, found in Tetronarce californica (Pacific electric ray).